The chain runs to 453 residues: Serine incorporator 1 (453 aa).

Gly2 carries the N-myristoyl glycine lipid modification. Topologically, residues 2-39 are cytoplasmic; it reads GSVLGLCSVASWIPCLCGSAPCLLCRCCPSGNNSTVTR. Residues 40 to 60 traverse the membrane as a helical segment; sequence LIYALFLLVGVCVACVMLIPG. The Lumenal portion of the chain corresponds to 61–88; it reads MEEQLNKIPGFCENEKGVVPCNILVGYK. The helical transmembrane segment at 89 to 109 threads the bilayer; the sequence is AVYRLCFGLAMFYLLLSLLMI. Residues 110-123 are Cytoplasmic-facing; that stretch reads KVKSSSDPRAAVHN. Residues 124–144 form a helical membrane-spanning segment; the sequence is GFWFFKFATAVAIIIGAFFIP. Residues 145–151 lie on the Lumenal side of the membrane; the sequence is EGTFTTV. Residues 152 to 172 traverse the membrane as a helical segment; sequence WFYVGMAGAFCFILIQLVLLI. Residues 173-197 lie on the Cytoplasmic side of the membrane; it reads DFAHSWNESWVEKMEEGNSRCWYAA. The helical transmembrane segment at 198-218 threads the bilayer; the sequence is LLSATALNYLLSLVAVVLFFV. Over 219–231 the chain is Lumenal; that stretch reads YYTHPASCAENKA. Residues 232-252 form a helical membrane-spanning segment; that stretch reads FISVNMLLCIGASVMSILPKI. Residues 253 to 259 lie on the Cytoplasmic side of the membrane; the sequence is QESQPRS. A helical transmembrane segment spans residues 260 to 280; it reads GLLQSSVITVYTMYLTWSAMT. The Lumenal portion of the chain corresponds to 281–309; that stretch reads NEPETNCNPSLLSIIGFNTTRPIPKDGQS. Residues 310–330 traverse the membrane as a helical segment; that stretch reads VQWWHPQGIIGLVLFLLCVFY. Residues 331–387 lie on the Cytoplasmic side of the membrane; that stretch reads SSIRTSNNSQVNKLTLTSDESTLIEDGNGRSDGSLDDGDGIHRAVDNERDGVTYSYS. Ser351 carries the post-translational modification Phosphoserine. Position 352 is a phosphothreonine (Thr352). Phosphoserine occurs at positions 361 and 364. A helical membrane pass occupies residues 388 to 408; the sequence is FFHFMLFLASLYIMMTLTNWY. Topologically, residues 409 to 426 are lumenal; that stretch reads RYEPSREMKSQWTAVWVK. A helical transmembrane segment spans residues 427 to 447; sequence ISSSWIGLVLYVWTLVAPLVL. The Cytoplasmic segment spans residues 448 to 453; sequence TNRDFD.

It belongs to the TDE1 family. In terms of assembly, interacts with SPTLC1. Highly expressed in the neuronal populations such as Purkinje cells in the cerebellum, brainstem and spinal motor neurons, locus coeruleus and raphe nuclei.

It localises to the endoplasmic reticulum membrane. Its function is as follows. Enhances the incorporation of serine into phosphatidylserine and sphingolipids. This Mus musculus (Mouse) protein is Serine incorporator 1 (Serinc1).